Reading from the N-terminus, the 565-residue chain is Zinc finger protein 512 (565 aa).

The tract at residues methionine 1–asparagine 30 is disordered. Residues serine 12–threonine 23 show a composition bias toward polar residues. Residues lysine 18 and lysine 83 each participate in a glycyl lysine isopeptide (Lys-Gly) (interchain with G-Cter in SUMO2) cross-link. The disordered stretch occupies residues alanine 85–proline 147. Positions lysine 118–proline 129 are enriched in basic residues. Residues phenylalanine 196–histidine 219 form a C2H2-type 1 zinc finger. Lysine 226 participates in a covalent cross-link: Glycyl lysine isopeptide (Lys-Gly) (interchain with G-Cter in SUMO2). A C2H2-type 2 zinc finger spans residues leucine 286 to histidine 309. A Glycyl lysine isopeptide (Lys-Gly) (interchain with G-Cter in SUMO2) cross-link involves residue lysine 332. The segment at isoleucine 405–cysteine 429 adopts a C2H2-type 3; atypical zinc-finger fold. A C2H2-type 4 zinc finger spans residues tyrosine 439–histidine 462. The span at lysine 484–arginine 493 shows a compositional bias: basic and acidic residues. The interval lysine 484–lysine 565 is disordered. The span at arginine 494 to glutamine 507 shows a compositional bias: basic residues. Positions valine 522–glutamate 531 are enriched in basic and acidic residues. Positions lysine 554–lysine 565 are enriched in basic residues.

The protein belongs to the krueppel C2H2-type zinc-finger protein family.

It is found in the nucleus. In terms of biological role, may be involved in transcriptional regulation. The polypeptide is Zinc finger protein 512 (ZNF512) (Macaca fascicularis (Crab-eating macaque)).